The following is a 187-amino-acid chain: MASTSDFKNGLVLQIEGQLWTITEFQHVKPGKGPAFVRTKLKNVLSGKVVDKTFNAGVKVDTATVDRRDMTYLYHDGTDYIFMDGDTYDQISISEATVGDGARFMLENMAVQVATHEDVPLFVELPVTVELVVQHTDPGLQGDRSTGGTKPATLETGAEINVPLFINTGDKLKVDSRDGNYLGRVNS.

This sequence belongs to the elongation factor P family.

The protein localises to the cytoplasm. It participates in protein biosynthesis; polypeptide chain elongation. Involved in peptide bond synthesis. Stimulates efficient translation and peptide-bond synthesis on native or reconstituted 70S ribosomes in vitro. Probably functions indirectly by altering the affinity of the ribosome for aminoacyl-tRNA, thus increasing their reactivity as acceptors for peptidyl transferase. This chain is Elongation factor P, found in Rhodococcus opacus (strain B4).